We begin with the raw amino-acid sequence, 1912 residues long: Protein javelin (1912 aa).

10 disordered regions span residues 1–32, 89–145, 298–377, 460–515, 545–586, 764–920, 965–1010, 1257–1297, 1486–1507, and 1881–1912; these read MGNG…QHNY, GTGL…VGGA, RSRH…HRLS, QSRR…SLSE, TTRT…TLRQ, SYNQ…EAPV, IQEN…GKPL, GINS…GGAA, EQQE…QYED, and YDPS…DDKM. Composition is skewed to basic residues over residues 97 to 133 and 299 to 313; these read QQLH…HPHA and SRHK…KKPP. Positions 339–354 are enriched in polar residues; the sequence is ADDTQSQRSNSATCDS. Positions 355–374 are enriched in low complexity; that stretch reads HQQQQQQQHQPQQQHQQQQH. The span at 489–498 shows a compositional bias: polar residues; sequence EHSQSSVFPE. Residues 499–512 are compositionally biased toward low complexity; sequence TTTSNSDDQTDSPS. Residues 553 to 566 are compositionally biased toward acidic residues; the sequence is SEEGEEEQTGEEVV. Polar residues predominate over residues 568–586; that stretch reads SLTTPTEPQTSDSESTLRQ. Basic and acidic residues-rich tracts occupy residues 772–792 and 802–869; these read QRKE…DSIR and RQRE…RKEE. Residues 890 to 904 are compositionally biased toward acidic residues; sequence SQQEDTVADVEEEDN. Positions 965 to 979 are enriched in basic and acidic residues; the sequence is IQENKETSQRIEPKP. Residues 981-990 are compositionally biased toward low complexity; the sequence is PKTNSNSSST. Composition is skewed to acidic residues over residues 1494–1507 and 1903–1912; these read LEEE…QYED and ELYDSLDDKM.

The protein localises to the cytoplasm. The protein resides in the cytoskeleton. Its function is as follows. Important for normal assembly of actin bundles during bristle formation. The chain is Protein javelin from Drosophila melanogaster (Fruit fly).